The primary structure comprises 596 residues: MIELKTLLDLPLHFLHLKQIHCLLLTSPIFYTRRDLFLSRLLRRCCTAATQFRYARRLLCQLQTLSIQLWDSLIGHFSGGITLNRRLSFLAYRHMRRNGVIPSRHTFPPLLKAVFKLRDSNPFQFHAHIVKFGLDSDPFVRNSLISGYSSSGLFDFASRLFDGAEDKDVVTWTAMIDGFVRNGSASEAMVYFVEMKKTGVAANEMTVVSVLKAAGKVEDVRFGRSVHGLYLETGRVKCDVFIGSSLVDMYGKCSCYDDAQKVFDEMPSRNVVTWTALIAGYVQSRCFDKGMLVFEEMLKSDVAPNEKTLSSVLSACAHVGALHRGRRVHCYMIKNSIEINTTAGTTLIDLYVKCGCLEEAILVFERLHEKNVYTWTAMINGFAAHGYARDAFDLFYTMLSSHVSPNEVTFMAVLSACAHGGLVEEGRRLFLSMKGRFNMEPKADHYACMVDLFGRKGLLEEAKALIERMPMEPTNVVWGALFGSCLLHKDYELGKYAASRVIKLQPSHSGRYTLLANLYSESQNWDEVARVRKQMKDQQVVKSPGFSWIEVKGKLCEFIAFDDKKPLESDDLYKTLDTVGVQMRLPDELEDVTAES.

PPR repeat units follow at residues 66–102 (SIQLWDSLIGHFSGGITLNRRLSFLAYRHMRRNGVIP), 103–136 (SRHTFPPLLKAVFKLRDSNPFQFHAHIVKFGLDS), 137–167 (DPFVRNSLISGYSSSGLFDFASRLFDGAEDK), 168–202 (DVVTWTAMIDGFVRNGSASEAMVYFVEMKKTGVAA), 203–237 (NEMTVVSVLKAAGKVEDVRFGRSVHGLYLETGRVK), 239–269 (DVFIGSSLVDMYGKCSCYDDAQKVFDEMPSR), 270–304 (NVVTWTALIAGYVQSRCFDKGMLVFEEMLKSDVAP), 305–339 (NEKTLSSVLSACAHVGALHRGRRVHCYMIKNSIEI), 340–370 (NTTAGTTLIDLYVKCGCLEEAILVFERLHEK), 371–405 (NVYTWTAMINGFAAHGYARDAFDLFYTMLSSHVSP), 406–436 (NEVTFMAVLSACAHGGLVEEGRRLFLSMKGR), and 442–472 (KADHYACMVDLFGRKGLLEEAKALIERMPME). The type E motif stretch occupies residues 477 to 552 (VWGALFGSCL…SPGFSWIEVK (76 aa)). The type E(+) motif stretch occupies residues 553 to 584 (GKLCEFIAFDDKKPLESDDLYKTLDTVGVQMR).

Belongs to the PPR family. PCMP-E subfamily.

The polypeptide is Pentatricopeptide repeat-containing protein At1g50270 (PCMP-E42) (Arabidopsis thaliana (Mouse-ear cress)).